The chain runs to 118 residues: Small ribosomal subunit protein uS13 (118 aa).

The interval arginine 92–lysine 118 is disordered.

Belongs to the universal ribosomal protein uS13 family. In terms of assembly, part of the 30S ribosomal subunit. Forms a loose heterodimer with protein S19. Forms two bridges to the 50S subunit in the 70S ribosome.

Its function is as follows. Located at the top of the head of the 30S subunit, it contacts several helices of the 16S rRNA. In the 70S ribosome it contacts the 23S rRNA (bridge B1a) and protein L5 of the 50S subunit (bridge B1b), connecting the 2 subunits; these bridges are implicated in subunit movement. Contacts the tRNAs in the A and P-sites. This is Small ribosomal subunit protein uS13 from Pseudomonas putida (strain ATCC 700007 / DSM 6899 / JCM 31910 / BCRC 17059 / LMG 24140 / F1).